The primary structure comprises 810 residues: DNA gyrase subunit A (810 aa).

Positions 36-502 (LPDVRDGLKP…EVLKTSMSDL (467 aa)) constitute a Topo IIA-type catalytic domain. Residue Tyr124 is the O-(5'-phospho-DNA)-tyrosine intermediate of the active site. The C-terminal domain stretch occupies residues 499–810 (MSDLMQKENI…SLVSVSKFIK (312 aa)). The short motif at 529-535 (QGTGGKG) is the GyrA-box element.

It belongs to the type II topoisomerase GyrA/ParC subunit family. Heterotetramer, composed of two GyrA and two GyrB chains. In the heterotetramer, GyrA contains the active site tyrosine that forms a transient covalent intermediate with DNA, while GyrB binds cofactors and catalyzes ATP hydrolysis.

The protein resides in the cytoplasm. It catalyses the reaction ATP-dependent breakage, passage and rejoining of double-stranded DNA.. In terms of biological role, a type II topoisomerase that negatively supercoils closed circular double-stranded (ds) DNA in an ATP-dependent manner to modulate DNA topology and maintain chromosomes in an underwound state. Negative supercoiling favors strand separation, and DNA replication, transcription, recombination and repair, all of which involve strand separation. Also able to catalyze the interconversion of other topological isomers of dsDNA rings, including catenanes and knotted rings. Type II topoisomerases break and join 2 DNA strands simultaneously in an ATP-dependent manner. This is DNA gyrase subunit A from Borreliella burgdorferi (strain ATCC 35210 / DSM 4680 / CIP 102532 / B31) (Borrelia burgdorferi).